The primary structure comprises 274 residues: Formamidopyrimidine-DNA glycosylase (274 aa).

Pro2 acts as the Schiff-base intermediate with DNA in catalysis. Residue Glu3 is the Proton donor of the active site. The active-site Proton donor; for beta-elimination activity is the Lys59. Residues His93, Arg112, and Lys153 each contribute to the DNA site. The FPG-type zinc-finger motif lies at 238–272 (QVHTKFNKPCPNCGELIQKIKLGGRGTYFCKKCQQ). Residue Arg262 is the Proton donor; for delta-elimination activity of the active site.

The protein belongs to the FPG family. In terms of assembly, monomer. Zn(2+) serves as cofactor.

It carries out the reaction Hydrolysis of DNA containing ring-opened 7-methylguanine residues, releasing 2,6-diamino-4-hydroxy-5-(N-methyl)formamidopyrimidine.. The catalysed reaction is 2'-deoxyribonucleotide-(2'-deoxyribose 5'-phosphate)-2'-deoxyribonucleotide-DNA = a 3'-end 2'-deoxyribonucleotide-(2,3-dehydro-2,3-deoxyribose 5'-phosphate)-DNA + a 5'-end 5'-phospho-2'-deoxyribonucleoside-DNA + H(+). In terms of biological role, involved in base excision repair of DNA damaged by oxidation or by mutagenic agents. Acts as a DNA glycosylase that recognizes and removes damaged bases. Has a preference for oxidized purines, such as 7,8-dihydro-8-oxoguanine (8-oxoG). Has AP (apurinic/apyrimidinic) lyase activity and introduces nicks in the DNA strand. Cleaves the DNA backbone by beta-delta elimination to generate a single-strand break at the site of the removed base with both 3'- and 5'-phosphates. The sequence is that of Formamidopyrimidine-DNA glycosylase from Mycoplasma mobile (strain ATCC 43663 / 163K / NCTC 11711) (Mesomycoplasma mobile).